The following is a 182-amino-acid chain: ATP synthase subunit delta (182 aa).

The protein belongs to the ATPase delta chain family. F-type ATPases have 2 components, F(1) - the catalytic core - and F(0) - the membrane proton channel. F(1) has five subunits: alpha(3), beta(3), gamma(1), delta(1), epsilon(1). CF(0) has four main subunits: a(1), b(1), b'(1) and c(10-14). The alpha and beta chains form an alternating ring which encloses part of the gamma chain. F(1) is attached to F(0) by a central stalk formed by the gamma and epsilon chains, while a peripheral stalk is formed by the delta, b and b' chains.

The protein resides in the cellular thylakoid membrane. In terms of biological role, f(1)F(0) ATP synthase produces ATP from ADP in the presence of a proton or sodium gradient. F-type ATPases consist of two structural domains, F(1) containing the extramembraneous catalytic core and F(0) containing the membrane proton channel, linked together by a central stalk and a peripheral stalk. During catalysis, ATP synthesis in the catalytic domain of F(1) is coupled via a rotary mechanism of the central stalk subunits to proton translocation. Functionally, this protein is part of the stalk that links CF(0) to CF(1). It either transmits conformational changes from CF(0) to CF(1) or is implicated in proton conduction. In Trichodesmium erythraeum (strain IMS101), this protein is ATP synthase subunit delta.